Consider the following 287-residue polypeptide: Ribosomal RNA small subunit methyltransferase A (287 aa).

S-adenosyl-L-methionine-binding residues include Asn-28, Leu-30, Gly-55, Glu-76, Asp-101, and Asn-125.

This sequence belongs to the class I-like SAM-binding methyltransferase superfamily. rRNA adenine N(6)-methyltransferase family. RsmA subfamily.

The protein resides in the cytoplasm. It catalyses the reaction adenosine(1518)/adenosine(1519) in 16S rRNA + 4 S-adenosyl-L-methionine = N(6)-dimethyladenosine(1518)/N(6)-dimethyladenosine(1519) in 16S rRNA + 4 S-adenosyl-L-homocysteine + 4 H(+). In terms of biological role, specifically dimethylates two adjacent adenosines (A1518 and A1519) in the loop of a conserved hairpin near the 3'-end of 16S rRNA in the 30S particle. May play a critical role in biogenesis of 30S subunits. This Alkaliphilus oremlandii (strain OhILAs) (Clostridium oremlandii (strain OhILAs)) protein is Ribosomal RNA small subunit methyltransferase A.